The primary structure comprises 223 residues: Ribosomal RNA small subunit methyltransferase G (223 aa).

Residues G90, L95, 141-142, and R156 each bind S-adenosyl-L-methionine; that span reads VE.

The protein belongs to the methyltransferase superfamily. RNA methyltransferase RsmG family.

It is found in the cytoplasm. The catalysed reaction is guanosine(527) in 16S rRNA + S-adenosyl-L-methionine = N(7)-methylguanosine(527) in 16S rRNA + S-adenosyl-L-homocysteine. Specifically methylates the N7 position of guanine in position 527 of 16S rRNA. This Ralstonia nicotianae (strain ATCC BAA-1114 / GMI1000) (Ralstonia solanacearum) protein is Ribosomal RNA small subunit methyltransferase G.